Reading from the N-terminus, the 355-residue chain is Uroporphyrinogen decarboxylase (355 aa).

Substrate is bound by residues 27 to 31 (RQAGR), D77, Y154, T209, and H328.

Belongs to the uroporphyrinogen decarboxylase family. Homodimer.

It localises to the cytoplasm. It carries out the reaction uroporphyrinogen III + 4 H(+) = coproporphyrinogen III + 4 CO2. It participates in porphyrin-containing compound metabolism; protoporphyrin-IX biosynthesis; coproporphyrinogen-III from 5-aminolevulinate: step 4/4. Functionally, catalyzes the decarboxylation of four acetate groups of uroporphyrinogen-III to yield coproporphyrinogen-III. In Colwellia psychrerythraea (strain 34H / ATCC BAA-681) (Vibrio psychroerythus), this protein is Uroporphyrinogen decarboxylase.